Here is a 100-residue protein sequence, read N- to C-terminus: Urease subunit gamma (100 aa).

It belongs to the urease gamma subunit family. In terms of assembly, heterotrimer of UreA (gamma), UreB (beta) and UreC (alpha) subunits. Three heterotrimers associate to form the active enzyme.

It is found in the cytoplasm. The catalysed reaction is urea + 2 H2O + H(+) = hydrogencarbonate + 2 NH4(+). It functions in the pathway nitrogen metabolism; urea degradation; CO(2) and NH(3) from urea (urease route): step 1/1. The sequence is that of Urease subunit gamma from Pseudarthrobacter chlorophenolicus (strain ATCC 700700 / DSM 12829 / CIP 107037 / JCM 12360 / KCTC 9906 / NCIMB 13794 / A6) (Arthrobacter chlorophenolicus).